A 331-amino-acid polypeptide reads, in one-letter code: E3 ubiquitin-protein ligase Siah2 (331 aa).

The segment at 1 to 26 (MSRPSSAGGAAGGLGAGKAGGSKHGG) is disordered. The segment covering 9–26 (GAAGGLGAGKAGGSKHGG) has biased composition (gly residues). The RING-type zinc-finger motif lies at 89-124 (CPVCFDYVLPPILQCQAGHLVCNQCRQKLSCCPTCR). The segment at 139–331 (VASTLPFPCK…LGINVTISMC (193 aa)) is SBD. The SIAH-type zinc-finger motif lies at 142–202 (TLPFPCKYSS…VMPHLMHAHK (61 aa)). Cys147, Cys154, His166, Cys170, Cys177, Cys184, His196, and His201 together coordinate Zn(2+).

This sequence belongs to the SINA (Seven in absentia) family. Homodimer. In embryos it is expressed in all blastomeres starting at the mid-blastulla. After 20 somite stage, it is expressed mainly in the posterior part. Expressed in brain, including the eye, the cranial cavity, otic vesicle, optic chiasm and in the gut.

The enzyme catalyses S-ubiquitinyl-[E2 ubiquitin-conjugating enzyme]-L-cysteine + [acceptor protein]-L-lysine = [E2 ubiquitin-conjugating enzyme]-L-cysteine + N(6)-ubiquitinyl-[acceptor protein]-L-lysine.. The protein operates within protein modification; protein ubiquitination. Its function is as follows. E3 ubiquitin-protein ligase that mediates ubiquitination and subsequent proteasomal degradation of target proteins. E3 ubiquitin ligases accept ubiquitin from an E2 ubiquitin-conjugating enzyme in the form of a thioester and then directly transfers the ubiquitin to targeted substrates. It probably triggers the ubiquitin-mediated degradation of different substrates. Induces cellular growth arrest by inhibiting the G2/M transition. May play a role in the regulation of the cellular clock function. This Danio rerio (Zebrafish) protein is E3 ubiquitin-protein ligase Siah2 (siah2l).